The following is a 425-amino-acid chain: MIDIKLIRQNPDFVKEALRKRGEDPAIIDEILKIDADWRATITKTNELRSRRNEISKNVARLKKEGKNAEAEALIEEGKRLGEEIKALEEKEKELQKKLNDLLLMIPNIPHESVPVGEDESQNVEVRRWGEPREFDFTPLAHWDLGPAWGLMDFSRASKLSGSRFTVMYGKLARLERALINFMLDVHTKEHGYTEVWVPHLVKRETITITGQLPKFEEELYLAERDDLFLIPTAEVPLAALHSGEILEEKELPKKYVSYTPCYRREAGSYGKDVRGMIRQHQFDKVELVWVTTPERSFEDLEELVKDAETILRKLELPYRVVSLCTGDLGFTSAKTYDIEVWLPSYNAYKEISSCSNVTDFQARRGNMRYRRRSDGKLEYVHTLNGSGIAVGRALVAILENYQQPDGSVRVPEVLVPYTGFEVIP.

233-235 (TAE) is a binding site for L-serine. 264–266 (RRE) is an ATP binding site. Glu287 serves as a coordination point for L-serine. 351-354 (EISS) is an ATP binding site. Residue Ser387 coordinates L-serine.

The protein belongs to the class-II aminoacyl-tRNA synthetase family. Type-1 seryl-tRNA synthetase subfamily. In terms of assembly, homodimer. The tRNA molecule binds across the dimer.

The protein resides in the cytoplasm. The enzyme catalyses tRNA(Ser) + L-serine + ATP = L-seryl-tRNA(Ser) + AMP + diphosphate + H(+). The catalysed reaction is tRNA(Sec) + L-serine + ATP = L-seryl-tRNA(Sec) + AMP + diphosphate + H(+). It participates in aminoacyl-tRNA biosynthesis; selenocysteinyl-tRNA(Sec) biosynthesis; L-seryl-tRNA(Sec) from L-serine and tRNA(Sec): step 1/1. Catalyzes the attachment of serine to tRNA(Ser). Is also able to aminoacylate tRNA(Sec) with serine, to form the misacylated tRNA L-seryl-tRNA(Sec), which will be further converted into selenocysteinyl-tRNA(Sec). The chain is Serine--tRNA ligase from Thermotoga maritima (strain ATCC 43589 / DSM 3109 / JCM 10099 / NBRC 100826 / MSB8).